The sequence spans 207 residues: Small ribosomal subunit protein uS4 (207 aa).

A compositionally biased stretch (basic and acidic residues) spans 31-40 (KCRLDNKPGQ). The tract at residues 31–56 (KCRLDNKPGQDGRTSGSRTSDYGNQL) is disordered. Over residues 42-53 (GRTSGSRTSDYG) the composition is skewed to polar residues. In terms of domain architecture, S4 RNA-binding spans 97–158 (SRLDNVVYRM…KAKKQARITE (62 aa)).

It belongs to the universal ribosomal protein uS4 family. In terms of assembly, part of the 30S ribosomal subunit. Contacts protein S5. The interaction surface between S4 and S5 is involved in control of translational fidelity.

Functionally, one of the primary rRNA binding proteins, it binds directly to 16S rRNA where it nucleates assembly of the body of the 30S subunit. In terms of biological role, with S5 and S12 plays an important role in translational accuracy. This Polynucleobacter necessarius subsp. necessarius (strain STIR1) protein is Small ribosomal subunit protein uS4.